A 1757-amino-acid chain; its full sequence is 1-phosphatidylinositol-3-phosphate 5-kinase FAB1A (1757 aa).

Residues D36–E102 form an FYVE-type zinc finger. 8 residues coordinate Zn(2+): C42, C45, C58, C61, C66, C69, C94, and C97. Disordered stretches follow at residues A125–Q193, K276–S297, L313–P346, and A684–S709. The span at N134–G145 shows a compositional bias: polar residues. Positions P317–D337 are enriched in acidic residues. The stretch at L1014 to D1087 forms a coiled coil. Residues S1395–F1719 enclose the PIPK domain. Residues A1729 to A1739 are compositionally biased toward low complexity. The interval A1729–S1757 is disordered.

As to quaternary structure, component of the PI(3,5)P2 regulatory complex at least composed of ATG18, SAC/FIG4, FAB1 and VAC14. Requires Mg(2+) as cofactor. Mn(2+) serves as cofactor. As to expression, ubiquitous with highest expression levels in pollen, seed, and senescent leaves.

It localises to the endosome membrane. The catalysed reaction is a 1,2-diacyl-sn-glycero-3-phospho-(1D-myo-inositol-3-phosphate) + ATP = a 1,2-diacyl-sn-glycero-3-phospho-(1D-myo-inositol-3,5-bisphosphate) + ADP + H(+). Functionally, the PI(3,5)P2 regulatory complex regulates both the synthesis and turnover of phosphatidylinositol 3,5-bisphosphate (PtdIns(3,5)P2). Catalyzes the phosphorylation of phosphatidylinositol 3-phosphate on the fifth hydroxyl of the myo-inositol ring, to form phosphatidylinositol 3,5-bisphosphate. Plays an important role in maintenance of endomembrane homeostasis including endocytosis, vacuole formation, and vacuolar acidification processes. Required for development of viable pollen. Might mediate recycling of auxin transporters. This Arabidopsis thaliana (Mouse-ear cress) protein is 1-phosphatidylinositol-3-phosphate 5-kinase FAB1A (FAB1A).